A 219-amino-acid polypeptide reads, in one-letter code: Small ribosomal subunit protein uS3 (219 aa).

Positions 38–106 (IREYINVRLK…RVHINILEVK (69 aa)) constitute a KH type-2 domain.

This sequence belongs to the universal ribosomal protein uS3 family. As to quaternary structure, part of the 30S ribosomal subunit. Forms a tight complex with proteins S10 and S14.

Binds the lower part of the 30S subunit head. Binds mRNA in the 70S ribosome, positioning it for translation. The sequence is that of Small ribosomal subunit protein uS3 from Bacillus thuringiensis (strain Al Hakam).